The primary structure comprises 364 residues: Inactive protein RESTRICTED TEV MOVEMENT 2 (364 aa).

A sHSP domain is found at 14-121 (VQYEDFVPKS…LPETSRTEAA (108 aa)). The stretch at 129–133 (LEEKR) is one A-1 repeat. Residues 129–220 (LEEKRLLEES…LEERRLEERK (92 aa)) form a 6 X 5 AA repeats A of L-E-E-[SKR]-[ERK] region. The stretch at 135–139 (LEESR) is one A-2 repeat. An A-3 repeat occupies 156–160 (LEEKE). One copy of the B-1 repeat lies at 163–176 (IRKLQEEAKAKEEA). The tract at residues 163 to 206 (IRKLQEEAKAKEEAEMRKLQEEAKAKEEAAAKKLQEEIEAKEKL) is 3 X 14 AA repeats B of [IMA]-[RK]-K-L-Q-E-E-A-K-A-K-E-[EK]-[LA]. Residues 178 to 191 (MRKLQEEAKAKEEA) form a B-2 repeat. One copy of the B-3 repeat lies at 193 to 205 (AKKLQEEIEAKEK). One copy of the A-4 repeat lies at 206-210 (LEERK). The stretch at 211-215 (LEERR) is one A-5 repeat. One copy of the A-6 repeat lies at 216 to 220 (LEERK). The helical transmembrane segment at 322 to 342 (LMMNVGVAALVIFALGAYVSY) threads the bilayer. Positions 345–364 (CSSSSSSSSPSSSSSSTKPE) are disordered. The segment covering 346 to 364 (SSSSSSSSPSSSSSSTKPE) has biased composition (low complexity).

The protein belongs to the small heat shock protein (HSP20) family.

The protein localises to the cell membrane. Seems to not be involved in heat resistance. Unable to mediate restriction of long-distance movement of the pathogenic tobacco etch virus (TEV) without causing a hypersensitive response or inducing systemic acquired resistance. The chain is Inactive protein RESTRICTED TEV MOVEMENT 2 (RTM2) from Arabidopsis thaliana (Mouse-ear cress).